The primary structure comprises 342 residues: S-adenosylmethionine:tRNA ribosyltransferase-isomerase (342 aa).

The protein belongs to the QueA family. As to quaternary structure, monomer.

Its subcellular location is the cytoplasm. The catalysed reaction is 7-aminomethyl-7-carbaguanosine(34) in tRNA + S-adenosyl-L-methionine = epoxyqueuosine(34) in tRNA + adenine + L-methionine + 2 H(+). It participates in tRNA modification; tRNA-queuosine biosynthesis. Transfers and isomerizes the ribose moiety from AdoMet to the 7-aminomethyl group of 7-deazaguanine (preQ1-tRNA) to give epoxyqueuosine (oQ-tRNA). This Streptococcus agalactiae serotype III (strain NEM316) protein is S-adenosylmethionine:tRNA ribosyltransferase-isomerase.